The chain runs to 468 residues: H(+)/Cl(-) exchange transporter ClcA (468 aa).

The Cytoplasmic portion of the chain corresponds to 1-32; that stretch reads MIKRERIVKSVLAHVPKDAINQFVSRGSTPTS. Residues 33-69 form a helical membrane-spanning segment; sequence FSVLFMAAIVGTLAGLVGTYFEIAVHFVSETRTEWLK. At 70–76 the chain is on the periplasmic side; that stretch reads SEIGSVL. A helical transmembrane segment spans residues 77 to 100; that stretch reads PLWLAAILISGALAFIGYYLVNRF. Positions 106-110 match the Selectivity filter part_1 motif; sequence GSGIP. Ser-107 is a binding site for chloride. The helical intramembrane region spans 109–116; that stretch reads IPEIEGAM. At 117–123 the chain is on the cytoplasmic side; the sequence is DNIRSVR. Helical transmembrane passes span 124 to 141 and 148 to 166; these read WWRV…ALGS and EGPT…TDIF. The Selectivity filter part_2 motif lies at 146–150; the sequence is GREGP. Topologically, residues 167–176 are cytoplasmic; it reads RVKDDDTRHS. 2 consecutive intramembrane regions (helical) follow at residues 177 to 189 and 193 to 201; these read LLAS…LAAA and PLAAIMFVV. Over 202–214 the chain is Cytoplasmic; the sequence is EEMRPQFRYSLIS. A helical membrane pass occupies residues 215–232; sequence IRAVIISAIMANIVFRAI. The Periplasmic portion of the chain corresponds to 233–252; that stretch reads NGQEAVITMPQYQSPELQSL. The helical transmembrane segment at 253–281 threads the bilayer; it reads WLFLLLGSLFGVFGVVFNKLITIAQDSFV. The Cytoplasmic portion of the chain corresponds to 282-287; the sequence is ALHKND. The chain crosses the membrane as a helical span at residues 288-309; the sequence is RKRYLITGTILGGVFGLLLLYV. Topologically, residues 310–329 are periplasmic; that stretch reads PQLTGGGIGLIPDITNGNYS. The next 2 helical transmembrane spans lie at 330–349 and 355–376; these read ISIL…LCFG and GIFA…ASAD. Positions 355–359 match the Selectivity filter part_3 motif; that stretch reads GIFAP. Chloride contacts are provided by Ile-356 and Phe-357. Residues 377 to 386 lie on the Periplasmic side of the membrane; the sequence is MLLPSLTIEP. The segment at residues 387–401 is an intramembrane region (helical); it reads GVFAIAGMGALFAAT. The note=Loop between two helices intramembrane region spans 402 to 404; it reads VRA. Positions 405-416 form an intramembrane region, helical; it reads PITGILLVIEMT. Residues 417–421 constitute an intramembrane region (note=Loop between two helices); the sequence is NNYYL. A helical membrane pass occupies residues 422–438; that stretch reads ILPLIITSLGAVIVAQL. The Cytoplasmic portion of the chain corresponds to 439–468; that stretch reads LGGQPIYSQLLHRTLKNDKLRQQDLPENQA. Residue Tyr-445 coordinates chloride.

This sequence belongs to the chloride channel (TC 2.A.49) family. ClcA subfamily. As to quaternary structure, homodimer.

The protein resides in the cell inner membrane. The catalysed reaction is 2 chloride(in) + H(+)(out) = 2 chloride(out) + H(+)(in). In terms of biological role, proton-coupled chloride transporter. Functions as antiport system and exchanges two chloride ions for 1 proton. Probably acts as an electrical shunt for an outwardly-directed proton pump that is linked to amino acid decarboxylation, as part of the extreme acid resistance (XAR) response. The protein is H(+)/Cl(-) exchange transporter ClcA of Vibrio campbellii (strain ATCC BAA-1116).